The primary structure comprises 783 residues: Aconitate hydratase, mitochondrial (783 aa).

The transit peptide at 1-25 (MITTRLARMGALAPKSRLLFGTRGM) directs the protein to the mitochondrion. Substrate contacts are provided by residues Gln-102 and 195-197 (DSH). [4Fe-4S] cluster-binding residues include Cys-388, Cys-451, and Cys-454. 2 residues coordinate substrate: Arg-477 and Arg-482. The interval 524–555 (EFKLKAPTGDGLPSRGYDPGRDTYQAPPTDRS) is disordered. Residues Arg-610 and 673–674 (SR) contribute to the substrate site.

This sequence belongs to the aconitase/IPM isomerase family. [4Fe-4S] cluster is required as a cofactor.

The protein localises to the mitochondrion. It catalyses the reaction citrate = D-threo-isocitrate. It carries out the reaction (2R)-homocitrate = cis-homoaconitate + H2O. Its pathway is carbohydrate metabolism; tricarboxylic acid cycle; isocitrate from oxaloacetate: step 2/2. It functions in the pathway amino-acid biosynthesis; L-lysine biosynthesis via AAA pathway; L-alpha-aminoadipate from 2-oxoglutarate: step 2/5. Catalyzes the isomerization of citrate to isocitrate via cis-aconitate, a step in the citric acid cycle. Also catalyzes the reversible dehydration of (R)-homocitrate to cis-homoaconitate, a step in the alpha-aminoadipate pathway for lysine biosynthesis. This is Aconitate hydratase, mitochondrial (acoA) from Emericella nidulans (strain FGSC A4 / ATCC 38163 / CBS 112.46 / NRRL 194 / M139) (Aspergillus nidulans).